The primary structure comprises 211 residues: Secreted phosphoprotein 24 (211 aa).

Positions 1 to 29 (MISRMEKMTMMMKILIMFALGMNYWSCSG) are cleaved as a signal peptide. 2 cysteine pairs are disulfide-bonded: Cys92-Cys103 and Cys116-Cys134. Ser96 bears the Phosphoserine mark. Ser145, Ser146, Ser170, Ser173, and Ser182 each carry phosphoserine.

This sequence belongs to the SPP2 family. In terms of processing, phosphorylation sites are present in the extracellular medium. In terms of tissue distribution, detected in liver and plasma.

Its subcellular location is the secreted. Could coordinate an aspect of bone turnover. In Homo sapiens (Human), this protein is Secreted phosphoprotein 24 (SPP2).